We begin with the raw amino-acid sequence, 344 residues long: Tripartite motif-containing protein 44 (344 aa).

2 disordered regions span residues 1 to 25 (MASG…EPDE) and 68 to 165 (TPPA…EFDP). Over residues 75–92 (GAGKEEAEVKVEQEREIE) the composition is skewed to basic and acidic residues. A compositionally biased stretch (acidic residues) spans 93 to 165 (SEAGEESESE…ETEAESEFDP (73 aa)). The B box-type zinc finger occupies 174–215 (VAKRKCPDHGLDLSTYCQEDRQLICVLCPVIGAHQGHQLSTL). Zn(2+) is bound by residues Cys-179, His-182, Cys-201, and His-207. Residues 290–325 (AHVTEILADIQSHMDRLMTQMAQAKEQLDTSNESAE) adopt a coiled-coil conformation. The interval 309–344 (QMAQAKEQLDTSNESAEPKAEGDEEGPSGASEEEDT) is disordered. Positions 330–344 (GDEEGPSGASEEEDT) are enriched in acidic residues. Ser-336 and Ser-339 each carry phosphoserine.

Interacts (via coiled coil) with TRIM17 (via coiled coil).

May play a role in the process of differentiation and maturation of neuronal cells. May regulate the activity of TRIM17. Is a negative regulator of PAX6 expression. This chain is Tripartite motif-containing protein 44 (TRIM44), found in Pongo abelii (Sumatran orangutan).